A 74-amino-acid polypeptide reads, in one-letter code: DNA-directed RNA polymerase subunit omega (74 aa).

Belongs to the RNA polymerase subunit omega family. The RNAP catalytic core consists of 2 alpha, 1 beta/beta' and 1 omega subunit. When a sigma factor is associated with the core the holoenzyme is formed, which can initiate transcription.

The catalysed reaction is RNA(n) + a ribonucleoside 5'-triphosphate = RNA(n+1) + diphosphate. Its function is as follows. Promotes RNA polymerase assembly. Latches the N- and C-terminal regions of the beta' subunit thereby facilitating its interaction with the beta and alpha subunits. The sequence is that of DNA-directed RNA polymerase subunit omega from Helicobacter hepaticus (strain ATCC 51449 / 3B1).